The primary structure comprises 666 residues: Nuclear distribution protein nudE homolog 1 (666 aa).

Residues 14–195 are a coiled coil; the sequence is EEEIAHYREK…KDQLARAIAT (182 aa). 4 disordered regions span residues 40–64, 220–310, 369–388, and 397–666; these read EFQQ…KQQA, DDIN…SGIP, KRVT…PAPH, and DHNT…KVKK. Residues 251 to 274 show a composition bias toward polar residues; that stretch reads RSGTMSSIPVASPSTKRFSQQIPH. 2 stretches are compositionally biased toward low complexity: residues 275–287 and 372–383; these read SPSF…STTS and TSTTSTTSSTTT. Positions 400–410 are enriched in polar residues; the sequence is TTPTAQSQQFP. 3 stretches are compositionally biased toward low complexity: residues 449–465, 473–485, and 536–554; these read PTFR…LPSR, ASGS…SGTA, and SATP…STSN. Composition is skewed to polar residues over residues 587 to 599 and 614 to 638; these read RQSL…TPTT and SSLS…SGRP.

Belongs to the nudE family. In terms of assembly, self-associates. Interacts with PAC1.

It is found in the cytoplasm. Its subcellular location is the cytoskeleton. Functionally, required for nuclear migration. The protein is Nuclear distribution protein nudE homolog 1 (NDE1) of Cryptococcus neoformans var. neoformans serotype D (strain B-3501A) (Filobasidiella neoformans).